The following is a 689-amino-acid chain: Protein asunder (689 aa).

Residues 521–550 (NGARLKLSKAKDQYRLLYRELEQLIQLNAT) are a coiled coil. The segment at 578–619 (GASLLRSYTESPLSPERLEPITSGSASGSSNSNSLLKASKRR) is disordered. Low complexity predominate over residues 600 to 614 (SGSASGSSNSNSLLK). Residues 613-619 (LKASKRR) carry the Nuclear localization signal (NLS) motif.

Belongs to the Integrator subunit 13 family. Belongs to the multiprotein complex Integrator, at least composed of IntS1, IntS2, IntS3, IntS4, omd/IntS5, IntS6, defl/IntS7, IntS8, IntS9, IntS10, IntS11, IntS12, asun/IntS13, IntS14 and IntS15. The core complex associates with protein phosphatase 2A subunits mts/PP2A and Pp2A-29B, to form the Integrator-PP2A (INTAC) complex. Post-translationally, phosphorylated.

The protein localises to the nucleus. It localises to the cytoplasm. It is found in the perinuclear region. Component of the integrator complex, a multiprotein complex that terminates RNA polymerase II (Pol II) transcription in the promoter-proximal region of genes. The integrator complex provides a quality checkpoint during transcription elongation by driving premature transcription termination of transcripts that are unfavorably configured for transcriptional elongation: the complex terminates transcription by (1) catalyzing dephosphorylation of the C-terminal domain (CTD) of Pol II subunit Polr2A/Rbp1 and Spt5, and (2) degrading the exiting nascent RNA transcript via endonuclease activity. The integrator complex is also involved in the 3'-end processing of the U7 snRNA, and also the spliceosomal snRNAs U1, U2, U4 and U5. The sequence is that of Protein asunder (asun) from Drosophila erecta (Fruit fly).